We begin with the raw amino-acid sequence, 283 residues long: Pantothenate synthetase (283 aa).

30–37 (MGNLHDGH) contacts ATP. The active-site Proton donor is histidine 37. A (R)-pantoate-binding site is contributed by glutamine 61. Glutamine 61 serves as a coordination point for beta-alanine. 149–152 (GEKD) contributes to the ATP binding site. Glutamine 155 provides a ligand contact to (R)-pantoate. 186–189 (LSSR) is a binding site for ATP.

This sequence belongs to the pantothenate synthetase family. In terms of assembly, homodimer.

Its subcellular location is the cytoplasm. It carries out the reaction (R)-pantoate + beta-alanine + ATP = (R)-pantothenate + AMP + diphosphate + H(+). It participates in cofactor biosynthesis; (R)-pantothenate biosynthesis; (R)-pantothenate from (R)-pantoate and beta-alanine: step 1/1. Functionally, catalyzes the condensation of pantoate with beta-alanine in an ATP-dependent reaction via a pantoyl-adenylate intermediate. The chain is Pantothenate synthetase from Escherichia coli (strain ATCC 8739 / DSM 1576 / NBRC 3972 / NCIMB 8545 / WDCM 00012 / Crooks).